We begin with the raw amino-acid sequence, 606 residues long: Membrane protein insertase YidC (606 aa).

The chain crosses the membrane as a helical span at residues 8 to 28; the sequence is LILATALSFIVILVWFVLFPP. A disordered region spans residues 33–59; it reads MPLTGETSTELTPDAATGSLPSVTSDT. The next 6 helical transmembrane spans lie at 116 to 136, 348 to 368, 374 to 394, 448 to 468, 506 to 526, and 542 to 562; these read IVTMLSPVGSPGAYYALYGWA, FIDSIDWGWFFFLTKPIFFLL, FIGNMGWAIIGLTLIIKAILL, LPILLQIPIFFSLYKVIFVTI, SIMALIFIGILPLLLGISMWL, and IFAWMPWVFMFMLGGFASGLV.

This sequence belongs to the OXA1/ALB3/YidC family. Type 1 subfamily. In terms of assembly, interacts with the Sec translocase complex via SecD. Specifically interacts with transmembrane segments of nascent integral membrane proteins during membrane integration.

It localises to the cell inner membrane. In terms of biological role, required for the insertion and/or proper folding and/or complex formation of integral membrane proteins into the membrane. Involved in integration of membrane proteins that insert both dependently and independently of the Sec translocase complex, as well as at least some lipoproteins. Aids folding of multispanning membrane proteins. The protein is Membrane protein insertase YidC of Roseobacter denitrificans (strain ATCC 33942 / OCh 114) (Erythrobacter sp. (strain OCh 114)).